The sequence spans 614 residues: Syringomycin synthase SyrB1 (614 aa).

The region spanning K535–L610 is the Carrier domain. S570 carries the O-(pantetheine 4'-phosphoryl)serine modification.

The protein belongs to the ATP-dependent AMP-binding enzyme family. Pantetheine 4'-phosphate serves as cofactor.

It carries out the reaction holo-[peptidyl-carrier protein] + L-threonine + ATP = L-threonyl-[peptidyl-carrier protein] + AMP + diphosphate. Involved in the biosynthesis of syringomycin E, a cyclic lipodepsinonapeptide toxin with phytotoxic activity. Specifically adenylates L-threonine and loads it onto its peptidyl carrier domain, via a thioester linkage to the phosphopanthetheine moiety. Is highly specific for L-threonine. The polypeptide is Syringomycin synthase SyrB1 (Pseudomonas syringae pv. syringae).